We begin with the raw amino-acid sequence, 122 residues long: Small ribosomal subunit protein uS13 (122 aa).

The segment at 92–122 (HRRGLPVRGQRTHTNARTRKGPAKPIAGKKK) is disordered.

It belongs to the universal ribosomal protein uS13 family. Part of the 30S ribosomal subunit. Forms a loose heterodimer with protein S19. Forms two bridges to the 50S subunit in the 70S ribosome.

Functionally, located at the top of the head of the 30S subunit, it contacts several helices of the 16S rRNA. In the 70S ribosome it contacts the 23S rRNA (bridge B1a) and protein L5 of the 50S subunit (bridge B1b), connecting the 2 subunits; these bridges are implicated in subunit movement. Contacts the tRNAs in the A and P-sites. The chain is Small ribosomal subunit protein uS13 from Paracoccus denitrificans (strain Pd 1222).